Here is a 276-residue protein sequence, read N- to C-terminus: Proteasome subunit beta type-8 (276 aa).

Positions 1-72 are cleaved as a propeptide — removed in mature form; that stretch reads MALLDLCGAP…RKVQIEMAHG (72 aa). The Nucleophile role is filled by threonine 73.

Belongs to the peptidase T1B family. As to quaternary structure, the 26S proteasome consists of a 20S proteasome core and two 19S regulatory subunits. The 20S proteasome core is composed of 28 subunits that are arranged in four stacked rings, resulting in a barrel-shaped structure. The two end rings are each formed by seven alpha subunits, and the two central rings are each formed by seven beta subunits. The catalytic chamber with the active sites is on the inside of the barrel. Component of the immunoproteasome, where it displaces the equivalent housekeeping subunit PSMB5. Component of the spermatoproteasome, a form of the proteasome specifically found in testis. Directly interacts with POMP. Interacts with TAP1. Post-translationally, autocleaved. The resulting N-terminal Thr residue of the mature subunit is responsible for the nucleophile proteolytic activity.

It is found in the cytoplasm. It localises to the nucleus. It catalyses the reaction Cleavage of peptide bonds with very broad specificity.. In terms of biological role, the proteasome is a multicatalytic proteinase complex which is characterized by its ability to cleave peptides with Arg, Phe, Tyr, Leu, and Glu adjacent to the leaving group at neutral or slightly basic pH. The proteasome has an ATP-dependent proteolytic activity. This subunit is involved in antigen processing to generate class I binding peptides. May participate in the generation of spliced peptides resulting from the ligation of two separate proteasomal cleavage products that are not contiguous in the parental protein. Required for adipocyte differentiation. The chain is Proteasome subunit beta type-8 (Psmb8) from Rattus norvegicus (Rat).